A 192-amino-acid chain; its full sequence is Thymidine kinase (192 aa).

Residues 9–16 (GAMNSGKS) and 85–88 (DEVQ) contribute to the ATP site. E86 serves as the catalytic Proton acceptor. Residues C143, C146, C181, and C184 each contribute to the Zn(2+) site.

The protein belongs to the thymidine kinase family. Homotetramer.

The protein localises to the cytoplasm. The catalysed reaction is thymidine + ATP = dTMP + ADP + H(+). The chain is Thymidine kinase from Shouchella clausii (strain KSM-K16) (Alkalihalobacillus clausii).